We begin with the raw amino-acid sequence, 1315 residues long: Probable nucleoporin C890.06 (1315 aa).

The protein belongs to the non-repetitive/WGA-negative nucleoporin family.

The protein resides in the cytoplasm. It localises to the nucleus. This is Probable nucleoporin C890.06 from Schizosaccharomyces pombe (strain 972 / ATCC 24843) (Fission yeast).